The following is a 302-amino-acid chain: Acetylglutamate kinase (302 aa).

Residues 55 to 56, Arg-77, and Asn-176 contribute to the substrate site; that span reads GG.

Belongs to the acetylglutamate kinase family. ArgB subfamily.

The protein localises to the cytoplasm. It carries out the reaction N-acetyl-L-glutamate + ATP = N-acetyl-L-glutamyl 5-phosphate + ADP. It participates in amino-acid biosynthesis; L-arginine biosynthesis; N(2)-acetyl-L-ornithine from L-glutamate: step 2/4. Catalyzes the ATP-dependent phosphorylation of N-acetyl-L-glutamate. The polypeptide is Acetylglutamate kinase (Corynebacterium efficiens (strain DSM 44549 / YS-314 / AJ 12310 / JCM 11189 / NBRC 100395)).